We begin with the raw amino-acid sequence, 152 residues long: Catabolic 3-dehydroquinase (152 aa).

Tyr24 (proton acceptor) is an active-site residue. Residues Asn75, His81, and Asp88 each contribute to the substrate site. His101 serves as the catalytic Proton donor. Residues 102–103 and Arg112 each bind substrate; that span reads IS.

The protein belongs to the type-II 3-dehydroquinase family. As to quaternary structure, homododecamer. Adopts a ring-like structure, composed of an arrangement of two hexameric rings stacked on top of one another.

The enzyme catalyses 3-dehydroquinate = 3-dehydroshikimate + H2O. The protein operates within aromatic compound metabolism; 3,4-dihydroxybenzoate biosynthesis; 3,4-dihydroxybenzoate from 3-dehydroquinate: step 1/2. Is involved in the catabolism of quinate. Allows the utilization of quinate as carbon source via the beta-ketoadipate pathway. The protein is Catabolic 3-dehydroquinase of Phaeosphaeria nodorum (strain SN15 / ATCC MYA-4574 / FGSC 10173) (Glume blotch fungus).